A 576-amino-acid chain; its full sequence is Putative export ATP-binding/permease protein RP696 (576 aa).

The 284-residue stretch at 20–303 folds into the ABC transmembrane type-1 domain; that stretch reads LIIVMISLLS…IFELLSEMHL (284 aa). 6 helical membrane-spanning segments follow: residues 21–41, 61–81, 135–155, 158–178, 242–262, and 277–297; these read IIVMISLLSVSASLLLIGSIF, ILYICLLIVILSVASFFRSYF, FLSFFIRNSVMLIGSITLMFF, FKLASIVIITIPILLVPLIKF, ALFFAISIAVIFLTITLIVWI, and IISFIYYAIIAGVSSGGIFEL. Residues 336-572 form the ABC transporter domain; that stretch reads IEFKNVDFTY…SEIYRNICRE (237 aa). 371 to 378 serves as a coordination point for ATP; it reads GRSGAGKS.

Belongs to the ABC transporter superfamily. Homodimer.

The protein resides in the cell inner membrane. Part of an ABC transporter complex. Transmembrane domains (TMD) form a pore in the inner membrane and the ATP-binding domain (NBD) is responsible for energy generation. This Rickettsia prowazekii (strain Madrid E) protein is Putative export ATP-binding/permease protein RP696.